Reading from the N-terminus, the 936-residue chain is Protein translocase subunit SecA (936 aa).

Residues Q87, 105–109 (GEGKT), and D515 contribute to the ATP site. Residues C920, C922, C931, and H932 each coordinate Zn(2+).

This sequence belongs to the SecA family. As to quaternary structure, monomer and homodimer. Part of the essential Sec protein translocation apparatus which comprises SecA, SecYEG and auxiliary proteins SecDF-YajC and YidC. Zn(2+) is required as a cofactor.

Its subcellular location is the cell inner membrane. It is found in the cytoplasm. It catalyses the reaction ATP + H2O + cellular proteinSide 1 = ADP + phosphate + cellular proteinSide 2.. Its function is as follows. Part of the Sec protein translocase complex. Interacts with the SecYEG preprotein conducting channel. Has a central role in coupling the hydrolysis of ATP to the transfer of proteins into and across the cell membrane, serving both as a receptor for the preprotein-SecB complex and as an ATP-driven molecular motor driving the stepwise translocation of polypeptide chains across the membrane. The chain is Protein translocase subunit SecA from Paraburkholderia phytofirmans (strain DSM 17436 / LMG 22146 / PsJN) (Burkholderia phytofirmans).